Here is a 166-residue protein sequence, read N- to C-terminus: MIIPRTGIGVDVHAFAAEGEARQLWVGGLLWPGERGLAGHSDGDPVAHAAADALFSAAGIGDLGTHFGTDRPEFAGASGVTLLAEAARIVRAAGFEIGNIAVQFVANRPKFGPRREESQQVLSDAAGAPVSVTATTSDGLGFTGRGEGISAVATALVYPRLSESIG.

A divalent metal cation is bound by residues Asp-11 and His-13. 4-CDP-2-C-methyl-D-erythritol 2-phosphate is bound by residues 11-13 (DVH) and 40-41 (HS). His-48 is an a divalent metal cation binding site. 4-CDP-2-C-methyl-D-erythritol 2-phosphate-binding positions include 62–64 (DLG), 135–138 (TTSD), Phe-142, and Arg-145.

The protein belongs to the IspF family. Homotrimer. A divalent metal cation serves as cofactor.

The catalysed reaction is 4-CDP-2-C-methyl-D-erythritol 2-phosphate = 2-C-methyl-D-erythritol 2,4-cyclic diphosphate + CMP. It participates in isoprenoid biosynthesis; isopentenyl diphosphate biosynthesis via DXP pathway; isopentenyl diphosphate from 1-deoxy-D-xylulose 5-phosphate: step 4/6. Functionally, involved in the biosynthesis of isopentenyl diphosphate (IPP) and dimethylallyl diphosphate (DMAPP), two major building blocks of isoprenoid compounds. Catalyzes the conversion of 4-diphosphocytidyl-2-C-methyl-D-erythritol 2-phosphate (CDP-ME2P) to 2-C-methyl-D-erythritol 2,4-cyclodiphosphate (ME-CPP) with a corresponding release of cytidine 5-monophosphate (CMP). The protein is 2-C-methyl-D-erythritol 2,4-cyclodiphosphate synthase of Pseudarthrobacter chlorophenolicus (strain ATCC 700700 / DSM 12829 / CIP 107037 / JCM 12360 / KCTC 9906 / NCIMB 13794 / A6) (Arthrobacter chlorophenolicus).